The primary structure comprises 262 residues: Taurine import ATP-binding protein TauB (262 aa).

The ABC transporter domain maps to 4-233 (LELERISAQY…RYAAGESARA (230 aa)). 38–45 (GPSGSGKT) contacts ATP.

Belongs to the ABC transporter superfamily. Taurine importer (TC 3.A.1.17.1) family. In terms of assembly, the complex is composed of two ATP-binding proteins (TauB), two transmembrane proteins (TauC) and a solute-binding protein (TauA).

It localises to the cell inner membrane. The catalysed reaction is taurine(out) + ATP + H2O = taurine(in) + ADP + phosphate + H(+). In terms of biological role, part of the ABC transporter complex TauABC involved in taurine import. Responsible for energy coupling to the transport system. This is Taurine import ATP-binding protein TauB from Pseudomonas putida (strain ATCC 47054 / DSM 6125 / CFBP 8728 / NCIMB 11950 / KT2440).